Consider the following 340-residue polypeptide: Uroporphyrinogen decarboxylase (340 aa).

Substrate contacts are provided by residues 23 to 27, Asp72, Tyr147, Thr202, and His316; that span reads RQAGR.

It belongs to the uroporphyrinogen decarboxylase family. As to quaternary structure, homodimer.

Its subcellular location is the cytoplasm. The catalysed reaction is uroporphyrinogen III + 4 H(+) = coproporphyrinogen III + 4 CO2. It participates in porphyrin-containing compound metabolism; protoporphyrin-IX biosynthesis; coproporphyrinogen-III from 5-aminolevulinate: step 4/4. Catalyzes the decarboxylation of four acetate groups of uroporphyrinogen-III to yield coproporphyrinogen-III. This is Uroporphyrinogen decarboxylase from Geobacter sulfurreducens (strain ATCC 51573 / DSM 12127 / PCA).